Reading from the N-terminus, the 151-residue chain is MATLESRLADMLKVPVEALGFQLWGIEYVQAGKHSILRVFIDGENGINIEDCANVSRQVSAVLDVEDPISTEYTLEVSSPGVDRPLFTAEQYAAYVGEDVKLQLTMPVAGSRNLKGAITQVDGQMLSVNVNGKELVVALDNIRKGNIIAKF.

This sequence belongs to the RimP family.

Its subcellular location is the cytoplasm. Its function is as follows. Required for maturation of 30S ribosomal subunits. The protein is Ribosome maturation factor RimP of Shewanella oneidensis (strain ATCC 700550 / JCM 31522 / CIP 106686 / LMG 19005 / NCIMB 14063 / MR-1).